The primary structure comprises 131 residues: uncharacterized protein (131 aa).

A disordered region spans residues 101-131 (SWWPPSGVVRGGPSSWPPSGVAEPREALGLP).

This is an uncharacterized protein from Homo sapiens (Human).